The sequence spans 334 residues: N-acetyl-gamma-glutamyl-phosphate reductase (334 aa).

Cys-154 is an active-site residue.

Belongs to the NAGSA dehydrogenase family. Type 1 subfamily.

Its subcellular location is the cytoplasm. The enzyme catalyses N-acetyl-L-glutamate 5-semialdehyde + phosphate + NADP(+) = N-acetyl-L-glutamyl 5-phosphate + NADPH + H(+). It participates in amino-acid biosynthesis; L-arginine biosynthesis; N(2)-acetyl-L-ornithine from L-glutamate: step 3/4. Its function is as follows. Catalyzes the NADPH-dependent reduction of N-acetyl-5-glutamyl phosphate to yield N-acetyl-L-glutamate 5-semialdehyde. The polypeptide is N-acetyl-gamma-glutamyl-phosphate reductase (Escherichia coli O6:H1 (strain CFT073 / ATCC 700928 / UPEC)).